Consider the following 20-residue polypeptide: NEQSGISQTVIVGPWGAQVT.

This sequence belongs to the jacalin lectin family. As to quaternary structure, tetramer of four alpha chains associated with two or four beta chains.

Its function is as follows. D-galactose-specific lectin, binds the T-antigen structure Gal-beta1,3-GalNAc (Thomsen-Friedenreich-antigen-specific lectin). Potent and selective stimulant of distinct T- and B-cell functions. Shows a unique ability to specifically recognize IgA-1 from human serum. This is Agglutinin beta-4 chain from Artocarpus integer (Jack fruit).